A 377-amino-acid polypeptide reads, in one-letter code: Cytochrome c peroxidase, mitochondrial (377 aa).

The transit peptide at 1-17 (MSFRAPNLIRSAAGRRA) directs the protein to the mitochondrion. The active-site Proton acceptor is the His138. His261 is a binding site for heme b. Catalysis depends on Trp277, which acts as the Tryptophan radical intermediate.

The protein belongs to the peroxidase family. Cytochrome c peroxidase subfamily. Forms a one-to-one complex with cytochrome c. Heme b serves as cofactor.

The protein resides in the mitochondrion matrix. It localises to the mitochondrion intermembrane space. The enzyme catalyses 2 Fe(II)-[cytochrome c] + H2O2 + 2 H(+) = 2 Fe(III)-[cytochrome c] + 2 H2O. Destroys radicals which are normally produced within the cells and which are toxic to biological systems. This Cryptococcus neoformans var. neoformans serotype D (strain JEC21 / ATCC MYA-565) (Filobasidiella neoformans) protein is Cytochrome c peroxidase, mitochondrial (CCP1).